We begin with the raw amino-acid sequence, 397 residues long: uncharacterized protein (397 aa).

12 helical membrane passes run 5 to 25 (LKIL…LWPL), 43 to 63 (LVLM…GFLF), 69 to 89 (FKSI…LVFF), 92 to 112 (WPAY…VFPA), 131 to 151 (AIYV…GVVA), 157 to 177 (YVFL…YFGF), 202 to 222 (FAAL…YSQW), 233 to 253 (IGIS…LIVL), 269 to 289 (LKAQ…MLLT), 293 to 313 (FPMF…VWPA), 333 to 353 (FVNS…GVLV), and 360 to 380 (ALVL…LLYD).

This sequence belongs to the major facilitator superfamily.

Its subcellular location is the cell membrane. This is an uncharacterized protein from Bacillus subtilis (strain 168).